Consider the following 1687-residue polypeptide: A-kinase anchor protein SPHKAP (1687 aa).

Over residues 1–14 (MDVNSRLSVQSNVE) the composition is skewed to polar residues. Disordered stretches follow at residues 1 to 25 (MDVN…PEPQ) and 272 to 293 (RKHR…ENTS). Residues 914 to 931 (FAEELAETVVSMATEIAA) are PKA-RII subunit binding domain. The segment at 964 to 989 (LKRKKENSSAGSTVRKHKPPRLSEIK) is disordered. Phosphoserine occurs at positions 1010, 1070, 1092, 1105, 1106, 1109, 1244, and 1273. Disordered stretches follow at residues 1363–1406 (VTEG…SPRR) and 1421–1520 (DQKE…PDDT). Over residues 1366-1375 (GNHSPVSSPG) the composition is skewed to polar residues. Over residues 1382-1393 (KPSDFDPRRETS) the composition is skewed to basic and acidic residues. Residues 1461-1470 (TAPSTCQSSR) are compositionally biased toward polar residues. The segment covering 1482-1494 (EVLKEDIPRDESR) has biased composition (basic and acidic residues). Positions 1495–1508 (NPPSSSEESTGSWS) are enriched in low complexity.

The protein belongs to the AKAP110 family. In terms of assembly, interacts (via the PKA-RII subunit binding domain) with the RI subunit of PKA. Interacts with SPHK1; the interaction greatly reduces SPHK1 activity.

It is found in the cytoplasm. Its function is as follows. Anchoring protein that binds preferentially to the type I regulatory subunit of c-AMP-dependent protein kinase (PKA type I) and targets it to distinct subcellular compartments. May act as a converging factor linking cAMP and sphingosine signaling pathways. Plays a regulatory role in the modulation of SPHK1. This Mus musculus (Mouse) protein is A-kinase anchor protein SPHKAP (Sphkap).